Consider the following 368-residue polypeptide: 3-dehydroquinate synthase (368 aa).

NAD(+)-binding positions include 69-74 (DGEAYK), 103-107 (GVIGD), 127-128 (TT), Lys-140, and Lys-149. Zn(2+) contacts are provided by Glu-182, His-245, and His-262.

It belongs to the sugar phosphate cyclases superfamily. Dehydroquinate synthase family. Co(2+) is required as a cofactor. Zn(2+) serves as cofactor. It depends on NAD(+) as a cofactor.

The protein resides in the cytoplasm. The catalysed reaction is 7-phospho-2-dehydro-3-deoxy-D-arabino-heptonate = 3-dehydroquinate + phosphate. The protein operates within metabolic intermediate biosynthesis; chorismate biosynthesis; chorismate from D-erythrose 4-phosphate and phosphoenolpyruvate: step 2/7. Catalyzes the conversion of 3-deoxy-D-arabino-heptulosonate 7-phosphate (DAHP) to dehydroquinate (DHQ). The chain is 3-dehydroquinate synthase from Pseudomonas aeruginosa (strain LESB58).